A 364-amino-acid chain; its full sequence is Protein-glutamate methylesterase/protein-glutamine glutaminase (364 aa).

Residues Arg-7–Glu-124 enclose the Response regulatory domain. Asp-58 is subject to 4-aspartylphosphate. In terms of domain architecture, CheB-type methylesterase spans Glu-167–Ser-364. Residues Ser-181, His-208, and Asp-308 contribute to the active site.

It belongs to the CheB family. In terms of processing, phosphorylated by CheA. Phosphorylation of the N-terminal regulatory domain activates the methylesterase activity.

It is found in the cytoplasm. It catalyses the reaction [protein]-L-glutamate 5-O-methyl ester + H2O = L-glutamyl-[protein] + methanol + H(+). It carries out the reaction L-glutaminyl-[protein] + H2O = L-glutamyl-[protein] + NH4(+). In terms of biological role, involved in chemotaxis. Part of a chemotaxis signal transduction system that modulates chemotaxis in response to various stimuli. Catalyzes the demethylation of specific methylglutamate residues introduced into the chemoreceptors (methyl-accepting chemotaxis proteins or MCP) by CheR. Also mediates the irreversible deamidation of specific glutamine residues to glutamic acid. This is Protein-glutamate methylesterase/protein-glutamine glutaminase from Methanosarcina barkeri (strain Fusaro / DSM 804).